The following is a 340-amino-acid chain: Beta-ketoacyl-[acyl-carrier-protein] synthase III (340 aa).

Active-site residues include cysteine 122 and histidine 260. Residues 261–265 (QANTR) are ACP-binding. Residue asparagine 291 is part of the active site.

This sequence belongs to the thiolase-like superfamily. FabH family. Homodimer.

The protein localises to the cytoplasm. It carries out the reaction malonyl-[ACP] + acetyl-CoA + H(+) = 3-oxobutanoyl-[ACP] + CO2 + CoA. It participates in lipid metabolism; fatty acid biosynthesis. Its function is as follows. Catalyzes the condensation reaction of fatty acid synthesis by the addition to an acyl acceptor of two carbons from malonyl-ACP. Catalyzes the first condensation reaction which initiates fatty acid synthesis and may therefore play a role in governing the total rate of fatty acid production. Possesses both acetoacetyl-ACP synthase and acetyl transacylase activities. Its substrate specificity determines the biosynthesis of branched-chain and/or straight-chain of fatty acids. In Mycobacteroides abscessus (strain ATCC 19977 / DSM 44196 / CCUG 20993 / CIP 104536 / JCM 13569 / NCTC 13031 / TMC 1543 / L948) (Mycobacterium abscessus), this protein is Beta-ketoacyl-[acyl-carrier-protein] synthase III.